A 301-amino-acid polypeptide reads, in one-letter code: tRNA dimethylallyltransferase 2 (301 aa).

11 to 18 (GATASGKT) contributes to the ATP binding site. 13–18 (TASGKT) is a substrate binding site. The segment at 36–39 (DSRQ) is interaction with substrate tRNA.

The protein belongs to the IPP transferase family. As to quaternary structure, monomer. Mg(2+) serves as cofactor.

It carries out the reaction adenosine(37) in tRNA + dimethylallyl diphosphate = N(6)-dimethylallyladenosine(37) in tRNA + diphosphate. Its function is as follows. Catalyzes the transfer of a dimethylallyl group onto the adenine at position 37 in tRNAs that read codons beginning with uridine, leading to the formation of N6-(dimethylallyl)adenosine (i(6)A). This is tRNA dimethylallyltransferase 2 from Shewanella sediminis (strain HAW-EB3).